The sequence spans 516 residues: Extracellular endo-inulinase inu2 (516 aa).

Positions 1 to 23 are cleaved as a signal peptide; sequence MLNPKVAYMVWMTCLGLTLPSQA. Substrate is bound by residues 41 to 43 and N61; that span reads MNE. E43 is an active-site residue. Residues N108 and N109 are each glycosylated (N-linked (GlcNAc...) asparagine). D176 is a binding site for substrate. N-linked (GlcNAc...) asparagine glycosylation is present at N210. Position 320 (N320) interacts with substrate. N372 carries an N-linked (GlcNAc...) asparagine glycan.

It belongs to the glycosyl hydrolase 32 family.

The protein resides in the secreted. The enzyme catalyses Endohydrolysis of (2-&gt;1)-beta-D-fructosidic linkages in inulin.. In terms of biological role, endo-inulinase involved in utilization of the plant storage polymer inulin, consisting of fructooligosaccharides with a degree of polymerization (DP) value from 2 to 60. This is Extracellular endo-inulinase inu2 (inu2) from Aspergillus ficuum.